The chain runs to 316 residues: MEAKLLKPAFYNSPNLNLTNSSRLISRLSIWNDKSKVGLSSGSLFLRLSAASPIRYSRGLLRVDESEYLKLESIRHSLIRQEDSIIFNLLERAQYRYNADTYDEDAFTMEGFQGSLVEFMVRETEKLHAKVDRYKSPDEHPFFPQCLPEPILPPIQYPQVLHRCAESININKKVWNMYFKHLLPRLVKPGDDGNCGSAALCDTMCLQILSKRIHFGKFVAEAKFRENPAAYETAIKEQDRTQLMQLLTYETVEEVVKKRVEIKARIFGQDITINDPETEADPSYKIQPSLVAKLYGERIMPLTKEVQIEYLLRRLD.

Residues 1 to 47 constitute a chloroplast transit peptide; sequence MEAKLLKPAFYNSPNLNLTNSSRLISRLSIWNDKSKVGLSSGSLFLR. Arg-62 contacts L-phenylalanine. One can recognise a Chorismate mutase domain in the interval 62–316; it reads RVDESEYLKL…QIEYLLRRLD (255 aa). Residues Arg-133 and 194 to 197 each bind L-tyrosine; that span reads NCGS. 194–197 contacts L-phenylalanine; it reads NCGS.

Homodimer. As to expression, expressed in roots, stems, cauline leaves, flowers and siliques, and at lower levels in rosette leaves.

The protein localises to the plastid. The protein resides in the chloroplast. The catalysed reaction is chorismate = prephenate. It participates in metabolic intermediate biosynthesis; prephenate biosynthesis; prephenate from chorismate: step 1/1. Allosterically inhibited by tyrosine and phenylalanine. According to another report, seems not to be repressed by tyrosine and phenylalanine. Activated by tryptophan, cysteine and histidine. Functionally, may play a role in chloroplast biogenesis. This chain is Chorismate mutase 3, chloroplastic, found in Arabidopsis thaliana (Mouse-ear cress).